The following is a 203-amino-acid chain: Holliday junction branch migration complex subunit RuvA (203 aa).

The domain I stretch occupies residues 1-63; the sequence is MIGKLSGKVD…EEHMHLYGFL (63 aa). The domain II stretch occupies residues 64–142; sequence TLEEKIFFNL…KISSGSAIIK (79 aa). The flexible linker stretch occupies residues 143–149; it reads ESLNIKN. The domain III stretch occupies residues 150-203; the sequence is ITPVASNEVIKALVNLGFSRFEAQNAVQGIITQNPEISIDELIKTALKNRNSNF.

Belongs to the RuvA family. In terms of assembly, homotetramer. Forms an RuvA(8)-RuvB(12)-Holliday junction (HJ) complex. HJ DNA is sandwiched between 2 RuvA tetramers; dsDNA enters through RuvA and exits via RuvB. An RuvB hexamer assembles on each DNA strand where it exits the tetramer. Each RuvB hexamer is contacted by two RuvA subunits (via domain III) on 2 adjacent RuvB subunits; this complex drives branch migration. In the full resolvosome a probable DNA-RuvA(4)-RuvB(12)-RuvC(2) complex forms which resolves the HJ.

It localises to the cytoplasm. In terms of biological role, the RuvA-RuvB-RuvC complex processes Holliday junction (HJ) DNA during genetic recombination and DNA repair, while the RuvA-RuvB complex plays an important role in the rescue of blocked DNA replication forks via replication fork reversal (RFR). RuvA specifically binds to HJ cruciform DNA, conferring on it an open structure. The RuvB hexamer acts as an ATP-dependent pump, pulling dsDNA into and through the RuvAB complex. HJ branch migration allows RuvC to scan DNA until it finds its consensus sequence, where it cleaves and resolves the cruciform DNA. The protein is Holliday junction branch migration complex subunit RuvA of Rickettsia peacockii (strain Rustic).